A 389-amino-acid chain; its full sequence is MNLHEYQSKKLFADYGLPVTKGYVCENVEQALSAIEKLSGSQWIAKCQIHAGGRGKAGGVKVVKSAQEVRSFFTKFLGQRLVTVQTNEQGQPIHQIYLEPCAEIQKELYLSAIIDRSSQRIVFMASSEGGMDIEEVAEKTPHLLHRVTIDPLVGAMPYQGRELAFKLGLSGKQIQQFSQIFCQLAKLFVEKDLSLLEINPLVILKNDELFCLDAKVVVDDNALYRHPDLFSMRDLTQEDPREAEAEKWNLNYVALDGNIGCMVNGAGLAMGTMDIIKLHGGRPANFLDVGGGATKERVMEAFKIILTDSAVKAVLVNIFGGIVRCDLIAKGIVSAINEIGVSVPVIVRLEGTNADLGREILAQSNLNLIAVNSLTEAAEQAVNAAKESE.

The ATP-grasp domain maps to 9-244 (KKLFADYGLP…LTQEDPREAE (236 aa)). Residues Lys46, 53-55 (GRG), Glu99, Ala102, and Glu107 each bind ATP. Residues Asn199 and Asp213 each contribute to the Mg(2+) site. Substrate contacts are provided by residues Asn264 and 321–323 (GIV).

Belongs to the succinate/malate CoA ligase beta subunit family. Heterotetramer of two alpha and two beta subunits. Mg(2+) is required as a cofactor.

It carries out the reaction succinate + ATP + CoA = succinyl-CoA + ADP + phosphate. The catalysed reaction is GTP + succinate + CoA = succinyl-CoA + GDP + phosphate. The protein operates within carbohydrate metabolism; tricarboxylic acid cycle; succinate from succinyl-CoA (ligase route): step 1/1. In terms of biological role, succinyl-CoA synthetase functions in the citric acid cycle (TCA), coupling the hydrolysis of succinyl-CoA to the synthesis of either ATP or GTP and thus represents the only step of substrate-level phosphorylation in the TCA. The beta subunit provides nucleotide specificity of the enzyme and binds the substrate succinate, while the binding sites for coenzyme A and phosphate are found in the alpha subunit. The chain is Succinate--CoA ligase [ADP-forming] subunit beta from Histophilus somni (strain 2336) (Haemophilus somnus).